A 1132-amino-acid chain; its full sequence is Myosin-binding protein C, fast-type (1132 aa).

A disordered region spans residues 1 to 59; the sequence is MPEPSKAAPKKEAKKKEEKKEEKKEAPPPQEHKDEAPDDVHPPETPDPEGLFLSKPQNV. Basic and acidic residues predominate over residues 9–44; sequence PKKEAKKKEEKKEEKKEAPPPQEHKDEAPDDVHPPE. 5 consecutive Ig-like C2-type domains span residues 48-149, 249-338, 339-429, 430-530, and 531-630; these read PEGL…SIDV, SEAF…VKEP, PVTV…VEEK, QLEV…KQEP, and PKIH…VVDV. Fibronectin type-III domains follow at residues 633–729 and 731–826; these read PPQS…IAPT and EPTH…IREI. The 94-residue stretch at 830–923 folds into the Ig-like C2-type 6 domain; it reads PKIRLPRHLR…ATLRLRVVER (94 aa). The region spanning 926 to 1022 is the Fibronectin type-III 3 domain; the sequence is PPQAVRVMEV…HNTARIAKEG (97 aa). The Ig-like C2-type 7 domain occupies 1039-1132; the sequence is PQFLTPLVDR…ECRLDVRVPQ (94 aa).

Belongs to the immunoglobulin superfamily. MyBP family.

Thick filament-associated protein located in the crossbridge region of vertebrate striated muscle a bands. In vitro it binds MHC, F-actin and native thin filaments, and modifies the activity of actin-activated myosin ATPase. It may modulate muscle contraction or may play a more structural role. The sequence is that of Myosin-binding protein C, fast-type (MYBPC2) from Gallus gallus (Chicken).